A 176-amino-acid polypeptide reads, in one-letter code: Ubiquitin-conjugating enzyme E2-20 kDa (176 aa).

Polar residues predominate over residues 1–20; the sequence is MDSDMQNQNPHTNSKNSSSA. A disordered region spans residues 1–25; that stretch reads MDSDMQNQNPHTNSKNSSSAGMAVD. Positions 28-175 constitute a UBC core domain; it reads SVTKRLRSEL…LMQRYKEIDE (148 aa). C113 (glycyl thioester intermediate) is an active-site residue.

Belongs to the ubiquitin-conjugating enzyme family.

It catalyses the reaction S-ubiquitinyl-[E1 ubiquitin-activating enzyme]-L-cysteine + [E2 ubiquitin-conjugating enzyme]-L-cysteine = [E1 ubiquitin-activating enzyme]-L-cysteine + S-ubiquitinyl-[E2 ubiquitin-conjugating enzyme]-L-cysteine.. The protein operates within protein modification; protein ubiquitination. Its function is as follows. Catalyzes the covalent attachment of ubiquitin to other proteins. The polypeptide is Ubiquitin-conjugating enzyme E2-20 kDa (ubc11) (Schizosaccharomyces pombe (strain 972 / ATCC 24843) (Fission yeast)).